The chain runs to 145 residues: Bacilliredoxin ABC2045 (145 aa).

Belongs to the bacilliredoxin family.

The protein is Bacilliredoxin ABC2045 of Shouchella clausii (strain KSM-K16) (Alkalihalobacillus clausii).